The sequence spans 488 residues: N-succinylglutamate 5-semialdehyde dehydrogenase (488 aa).

Glycine 221–glycine 226 provides a ligand contact to NAD(+). Residues glutamate 244 and cysteine 278 contribute to the active site.

It belongs to the aldehyde dehydrogenase family. AstD subfamily.

The enzyme catalyses N-succinyl-L-glutamate 5-semialdehyde + NAD(+) + H2O = N-succinyl-L-glutamate + NADH + 2 H(+). It functions in the pathway amino-acid degradation; L-arginine degradation via AST pathway; L-glutamate and succinate from L-arginine: step 4/5. Functionally, catalyzes the NAD-dependent reduction of succinylglutamate semialdehyde into succinylglutamate. This Pseudomonas savastanoi pv. phaseolicola (strain 1448A / Race 6) (Pseudomonas syringae pv. phaseolicola (strain 1448A / Race 6)) protein is N-succinylglutamate 5-semialdehyde dehydrogenase.